The primary structure comprises 650 residues: Glycoprotein antigen BM86 (650 aa).

Residues 1-19 (MRGIALFVAAVSLIVEGTA) form the signal peptide. 2 EGF-like domains span residues 20 to 66 (ESSI…KQCE) and 67 to 104 (YKDT…LQCK). 6 disulfide bridges follow: C24–C37, C32–C49, C51–C65, C71–C81, C76–C91, and C93–C103. N-linked (GlcNAc...) asparagine glycans are attached at residues N141 and N182. EGF-like domains lie at 205–247 (CINA…ITCK), 251–292 (HTVS…DTCI), and 291–335 (CISD…NECL). 9 disulfides stabilise this stretch: C209/C222, C218/C231, C233/C246, C255/C269, C263/C278, C280/C291, C295/C307, C300/C316, and C318/C334. 2 N-linked (GlcNAc...) asparagine glycosylation sites follow: N348 and N382. 2 consecutive EGF-like domains span residues 482–530 (RRSV…IGCI) and 531–568 (ERTT…HECY). 6 disulfide bridges follow: C486-C500, C492-C516, C518-C529, C535-C550, C543-C559, and C561-C567. The segment at 603–628 (KSEATTAATTTTKAKDKDPDPGKSSA) is disordered. S627 carries the GPI-anchor amidated serine lipid modification. A propeptide spans 628 to 650 (AAAVSATGLLLLLAATSVTAASL) (removed in mature form).

It localises to the cell membrane. The chain is Glycoprotein antigen BM86 from Rhipicephalus microplus (Cattle tick).